The primary structure comprises 227 residues: Nodulation protein W (227 aa).

Residues 21–135 (IVFVVEDDIS…ELLDAVVAAT (115 aa)) enclose the Response regulatory domain. A 4-aspartylphosphate modification is found at Asp70. Residues 151–216 (LKSLFETLSP…DLIRMSETLG (66 aa)) enclose the HTH luxR-type domain. Positions 175–194 (NKQVAAELGLAEITVKIYRG) form a DNA-binding region, H-T-H motif.

Phosphorylated by NodV.

Its subcellular location is the cytoplasm. Functionally, member of the two-component regulatory system NodV/NodW probably involved in the regulation of the transcription of genes involved in the nodulation process. In Bradyrhizobium diazoefficiens (strain JCM 10833 / BCRC 13528 / IAM 13628 / NBRC 14792 / USDA 110), this protein is Nodulation protein W (nodW).